A 329-amino-acid chain; its full sequence is DNA-directed RNA polymerase subunit alpha (329 aa).

The interval 1–235 (MQGFVEDFLK…QQLEAFVDLR (235 aa)) is alpha N-terminal domain (alpha-NTD). Residues 249 to 329 (FEPVLLRPVD…NWPPKSLLED (81 aa)) are alpha C-terminal domain (alpha-CTD).

It belongs to the RNA polymerase alpha chain family. As to quaternary structure, homodimer. The RNAP catalytic core consists of 2 alpha, 1 beta, 1 beta' and 1 omega subunit. When a sigma factor is associated with the core the holoenzyme is formed, which can initiate transcription.

The enzyme catalyses RNA(n) + a ribonucleoside 5'-triphosphate = RNA(n+1) + diphosphate. Functionally, DNA-dependent RNA polymerase catalyzes the transcription of DNA into RNA using the four ribonucleoside triphosphates as substrates. The polypeptide is DNA-directed RNA polymerase subunit alpha (Buchnera aphidicola subsp. Cinara cedri (strain Cc)).